Here is a 110-residue protein sequence, read N- to C-terminus: Insulin (110 aa).

The signal sequence occupies residues methionine 1–alanine 24. Intrachain disulfides connect cysteine 31–cysteine 96, cysteine 43–cysteine 109, and cysteine 95–cysteine 100. Positions glycine 57–glutamine 87 are cleaved as a propeptide — c peptide.

Belongs to the insulin family. As to quaternary structure, heterodimer of a B chain and an A chain linked by two disulfide bonds.

It localises to the secreted. Its function is as follows. Insulin decreases blood glucose concentration. It increases cell permeability to monosaccharides, amino acids and fatty acids. It accelerates glycolysis, the pentose phosphate cycle, and glycogen synthesis in liver. In Psammomys obesus (Fat sand rat), this protein is Insulin (INS).